The chain runs to 70 residues: uncharacterized protein (70 aa).

This is an uncharacterized protein from Saccharomyces cerevisiae (strain ATCC 204508 / S288c) (Baker's yeast).